Consider the following 500-residue polypeptide: NAD(P)H-quinone oxidoreductase chain 4, chloroplastic (500 aa).

15 consecutive transmembrane segments (helical) span residues 4-24 (FPWL…MLFL), 35-55 (YTIC…CYNF), 87-107 (IGTI…AFPV), 113-130 (LFHF…GSFS), 134-154 (LLLF…LLAM), 167-187 (FILY…GISL), 211-231 (ILFY…IPLH), 242-262 (HYST…YGLV), 272-292 (AHSM…IYAA), 305-325 (IAYS…SITD), 330-350 (GAIL…FLAG), 364-384 (MGGM…LSMA), 386-406 (LALP…GIIT), 411-431 (FLIF…LTPI), and 462-482 (LFLS…PDFV).

The protein belongs to the complex I subunit 4 family.

The protein localises to the plastid. It is found in the chloroplast thylakoid membrane. It catalyses the reaction a plastoquinone + NADH + (n+1) H(+)(in) = a plastoquinol + NAD(+) + n H(+)(out). The catalysed reaction is a plastoquinone + NADPH + (n+1) H(+)(in) = a plastoquinol + NADP(+) + n H(+)(out). This is NAD(P)H-quinone oxidoreductase chain 4, chloroplastic from Capsella bursa-pastoris (Shepherd's purse).